The following is a 319-amino-acid chain: MKPENKLPVLDLISAEMKTVVNTLQPDLPPWPATGAIAEQRQYYTLERRFWNVGAPEMATRAYRVPTKYGQVKTRLFYPQPDSPATLFYLHGGGFILGNLDTHDRIMRLLASYSQCTVIGIDYTLSPEARFPQAIEEIVAACCYFHQQAEDYQINMSRIGFAGDSAGAMLALASALWLRDKQIDCGKVAGVLLWYGLYGLRDSVTRRLLGGVWDGLTQQDLQMYEEAYLSNDADRESPYYCLFNNDLTREVPPCFIAGAEFDPLLDDSCLLYQTLAAHQQPCEFKLYSGMLHAFLHYSRMMKTADEALRDGAQFFTAQL.

Positions 91–93 (HGG) match the Involved in the stabilization of the negatively charged intermediate by the formation of the oxyanion hole motif. Catalysis depends on residues serine 165, aspartate 262, and histidine 292.

It belongs to the 'GDXG' lipolytic enzyme family. As to quaternary structure, homodimer. Interacts with MalT and MelA.

The protein resides in the cytoplasm. Its function is as follows. Displays esterase activity towards short chain fatty esters (acyl chain length of up to 8 carbons). Able to hydrolyze triacetylglycerol (triacetin) and tributyrylglycerol (tributyrin), but not trioleylglycerol (triolein) or cholesterol oleate. Negatively regulates MalT activity by antagonizing maltotriose binding. Inhibits MelA galactosidase activity. This is Acetyl esterase from Escherichia coli O45:K1 (strain S88 / ExPEC).